The following is a 75-amino-acid chain: Movement protein TGBp3 (75 aa).

At 1–2 the chain is on the lumenal side; that stretch reads MR. A helical membrane pass occupies residues 3–23; the sequence is VLDLILALITAAVVGYTIALV. At 24–75 the chain is on the cytoplasmic side; that stretch reads SNSGCYVHFDGRSATTTCPPGPWVESIANGLYTAGLARPHPEPECERRQSSW.

Belongs to the Tymovirales TGBp3 protein family.

It is found in the host endoplasmic reticulum membrane. Its function is as follows. Plays a role in viral cell-to-cell propagation, by facilitating genome transport to neighboring plant cells through plasmosdesmata. May induce the formation of granular vesicles derived from the Endoplasmic reticulum, which align on actin filaments. The protein is Movement protein TGBp3 of Strawberry mild yellow edge-associated virus (SMYEaV).